A 359-amino-acid chain; its full sequence is Type-1 angiotensin II receptor B (359 aa).

Residues 1–25 (MTLNSSTEDGIKRIQDDCPKAGRHN) lie on the Extracellular side of the membrane. Asn-4 carries N-linked (GlcNAc...) asparagine glycosylation. Angiotensin II contacts are provided by Gln-15 and Asp-17. Intrachain disulfides connect Cys-18–Cys-274 and Cys-101–Cys-180. A helical membrane pass occupies residues 26-55 (YIFVMIPTLYSIIFVVGIFGNSLVVIVIYF). Residues 56–61 (YMKLKT) lie on the Cytoplasmic side of the membrane. A helical membrane pass occupies residues 62 to 89 (VASVFLLNLALADLCFLLTLPLWAVYTA). Over 90–98 (MEYRWPFGN) the chain is Extracellular. The helical transmembrane segment at 99–125 (HLCKIASASVSFNLYASVFLLTCLSID) threads the bilayer. At 126–141 (RYLAIVHPMKSRLRRT) the chain is on the cytoplasmic side. The chain crosses the membrane as a helical span at residues 142 to 165 (MLVAKVTCIIIWLMAGLASLPAVI). The Extracellular segment spans residues 166 to 190 (YRNVYFIENTNITVCAFHYESQNST). Residue Arg-167 participates in angiotensin II binding. Asn-176 carries an N-linked (GlcNAc...) asparagine glycan. Residues Phe-182, His-183, and Tyr-184 each coordinate angiotensin II. N-linked (GlcNAc...) asparagine glycosylation occurs at Asn-188. The chain crosses the membrane as a helical span at residues 191-216 (LPIGLGLTKNILGFVFPFLIILTSYT). Position 199 (Lys-199) interacts with angiotensin II. Over 217-239 (LIWKALKKAYKIQKNTPRNDDIF) the chain is Cytoplasmic. The helical transmembrane segment at 240–268 (RIIMAIVLFFFFSWVPHQIFTFLDVLIQL) threads the bilayer. Residues 269–278 (GIIRDCEIAD) are Extracellular-facing. Residues 279-304 (IVDTAMPITICIAYFNNCLNPLFYGF) form a helical membrane-spanning segment. Residues 305–359 (LGKKFKKYFLQLLKYIPPTAKSHAGLSTKMSTLSYRPSDNMSSSAKKSASFFEVE) lie on the Cytoplasmic side of the membrane. The tract at residues 339–359 (YRPSDNMSSSAKKSASFFEVE) is disordered. Residues 346–359 (SSSAKKSASFFEVE) show a composition bias toward low complexity.

It belongs to the G-protein coupled receptor 1 family. In terms of assembly, interacts with MAS1. Interacts with ARRB1. Interacts with FLNA (via filamin repeat 21); increases PKA-mediated phosphorylation of FLNA. C-terminal Ser or Thr residues may be phosphorylated. In terms of tissue distribution, is expressed in the liver, kidney, aorta, lung, uterus, ovary, spleen, heart, and vascular smooth muscle cell. Expressed most abundantly in the adrenal gland.

It is found in the cell membrane. Functionally, receptor for angiotensin II, a vasoconstricting peptide, which acts as a key regulator of blood pressure and sodium retention by the kidney. The activated receptor in turn couples to G-alpha proteins G(q) (GNAQ, GNA11, GNA14 or GNA15) and thus activates phospholipase C and increases the cytosolic Ca(2+) concentrations, which in turn triggers cellular responses such as stimulation of protein kinase C. The polypeptide is Type-1 angiotensin II receptor B (Agtr1b) (Rattus norvegicus (Rat)).